We begin with the raw amino-acid sequence, 169 residues long: Peptide deformylase (169 aa).

2 residues coordinate Fe cation: Cys91 and His133. Residue Glu134 is part of the active site. Position 137 (His137) interacts with Fe cation.

Belongs to the polypeptide deformylase family. It depends on Fe(2+) as a cofactor.

The enzyme catalyses N-terminal N-formyl-L-methionyl-[peptide] + H2O = N-terminal L-methionyl-[peptide] + formate. Functionally, removes the formyl group from the N-terminal Met of newly synthesized proteins. Requires at least a dipeptide for an efficient rate of reaction. N-terminal L-methionine is a prerequisite for activity but the enzyme has broad specificity at other positions. This chain is Peptide deformylase, found in Serratia proteamaculans (strain 568).